We begin with the raw amino-acid sequence, 288 residues long: Homoserine kinase (288 aa).

79–89 serves as a coordination point for ATP; sequence PPARGLGSSSA.

This sequence belongs to the GHMP kinase family. Homoserine kinase subfamily.

It is found in the cytoplasm. It carries out the reaction L-homoserine + ATP = O-phospho-L-homoserine + ADP + H(+). The protein operates within amino-acid biosynthesis; L-threonine biosynthesis; L-threonine from L-aspartate: step 4/5. In terms of biological role, catalyzes the ATP-dependent phosphorylation of L-homoserine to L-homoserine phosphate. The sequence is that of Homoserine kinase from Listeria monocytogenes serovar 1/2a (strain ATCC BAA-679 / EGD-e).